The primary structure comprises 101 residues: Immunity protein CdiI-2 (101 aa).

Specifically interacts with the truncated CT fragment of cognate toxin protein CdiA-2, which inhibits CdiA-2 tRNA nuclease activity.

Functionally, immunity protein component of a toxin-immunity protein module, which functions as a cellular contact-dependent growth inhibition (CDI) system. CDI modules allow bacteria to communicate with and inhibit the growth of closely related neighboring bacteria in a contact-dependent fashion. Neutralizes the toxic activity of cognate toxin CdiA (C-terminal 301 residue CT fragment) upon expression in E.coli. Does not inhibit toxic activity of CdiA from other strains of B.pseudomallei. Its function is as follows. Expression of this cdiAIB locus in B.thailandensis confers protection against other bacteria carrying the locus; growth inhibition requires cellular contact. In Burkholderia pseudomallei (strain 1026b), this protein is Immunity protein CdiI-2 (cdiI2).